Here is a 211-residue protein sequence, read N- to C-terminus: Urease accessory protein UreG (211 aa).

Residue 13-20 (GPVGSGKT) participates in GTP binding.

This sequence belongs to the SIMIBI class G3E GTPase family. UreG subfamily. As to quaternary structure, homodimer. UreD, UreF and UreG form a complex that acts as a GTP-hydrolysis-dependent molecular chaperone, activating the urease apoprotein by helping to assemble the nickel containing metallocenter of UreC. The UreE protein probably delivers the nickel.

It is found in the cytoplasm. Its function is as follows. Facilitates the functional incorporation of the urease nickel metallocenter. This process requires GTP hydrolysis, probably effectuated by UreG. In Alkalilimnicola ehrlichii (strain ATCC BAA-1101 / DSM 17681 / MLHE-1), this protein is Urease accessory protein UreG.